A 332-amino-acid chain; its full sequence is Phospholipase A2 inhibitor beta (332 aa).

An N-terminal signal peptide occupies residues 1-23; sequence MKSSVPSLLFVSLVMSLNSYTQQ. Asn-35 carries an N-linked (GlcNAc...) asparagine glycan. LRR repeat units lie at residues 78–101, 103–125, 127–149, 150–173, 175–197, 198–221, 223–245, and 247–269; these read LPNL…LFRN, PELH…IFTS, TSLT…WFET, LKEL…CFDK, EKLT…MFSG, LDNL…SFHG, PKLS…VFQP, and NHXV…VAIP. Asn-232 is a glycosylation site (N-linked (GlcNAc...) asparagine). An N-linked (GlcNAc...) asparagine glycan is attached at Asn-272. The 52-residue stretch at 280–331 folds into the LRRCT domain; it reads NPWACNCRMDNLLTWVKEHKIDLYSKQEIVCAFPKSFKGEEATSLHRSQICP.

The protein belongs to the beta-type phospholipase A2 inhibitor family. Homotrimer.

The protein resides in the secreted. Inhibits the enzymatic activity of the basic phospholipase A2 (PLA2). This is Phospholipase A2 inhibitor beta from Elaphe climacophora (Japanese rat snake).